Reading from the N-terminus, the 206-residue chain is Thiamine-phosphate synthase (206 aa).

4-amino-2-methyl-5-(diphosphooxymethyl)pyrimidine-binding positions include 38-42 (QLREK) and asparagine 70. Mg(2+) contacts are provided by aspartate 71 and aspartate 90. A 4-amino-2-methyl-5-(diphosphooxymethyl)pyrimidine-binding site is contributed by threonine 109. 135 to 137 (TST) is a binding site for 2-[(2R,5Z)-2-carboxy-4-methylthiazol-5(2H)-ylidene]ethyl phosphate. Lysine 138 contributes to the 4-amino-2-methyl-5-(diphosphooxymethyl)pyrimidine binding site. Residues glycine 165 and 185 to 186 (VS) each bind 2-[(2R,5Z)-2-carboxy-4-methylthiazol-5(2H)-ylidene]ethyl phosphate.

It belongs to the thiamine-phosphate synthase family. Mg(2+) is required as a cofactor.

It carries out the reaction 2-[(2R,5Z)-2-carboxy-4-methylthiazol-5(2H)-ylidene]ethyl phosphate + 4-amino-2-methyl-5-(diphosphooxymethyl)pyrimidine + 2 H(+) = thiamine phosphate + CO2 + diphosphate. The catalysed reaction is 2-(2-carboxy-4-methylthiazol-5-yl)ethyl phosphate + 4-amino-2-methyl-5-(diphosphooxymethyl)pyrimidine + 2 H(+) = thiamine phosphate + CO2 + diphosphate. It catalyses the reaction 4-methyl-5-(2-phosphooxyethyl)-thiazole + 4-amino-2-methyl-5-(diphosphooxymethyl)pyrimidine + H(+) = thiamine phosphate + diphosphate. It functions in the pathway cofactor biosynthesis; thiamine diphosphate biosynthesis; thiamine phosphate from 4-amino-2-methyl-5-diphosphomethylpyrimidine and 4-methyl-5-(2-phosphoethyl)-thiazole: step 1/1. In terms of biological role, condenses 4-methyl-5-(beta-hydroxyethyl)thiazole monophosphate (THZ-P) and 2-methyl-4-amino-5-hydroxymethyl pyrimidine pyrophosphate (HMP-PP) to form thiamine monophosphate (TMP). The polypeptide is Thiamine-phosphate synthase (Fusobacterium nucleatum subsp. nucleatum (strain ATCC 25586 / DSM 15643 / BCRC 10681 / CIP 101130 / JCM 8532 / KCTC 2640 / LMG 13131 / VPI 4355)).